The chain runs to 440 residues: Thymidine phosphorylase (440 aa).

Belongs to the thymidine/pyrimidine-nucleoside phosphorylase family. As to quaternary structure, homodimer.

The enzyme catalyses thymidine + phosphate = 2-deoxy-alpha-D-ribose 1-phosphate + thymine. Its pathway is pyrimidine metabolism; dTMP biosynthesis via salvage pathway; dTMP from thymine: step 1/2. Its function is as follows. The enzymes which catalyze the reversible phosphorolysis of pyrimidine nucleosides are involved in the degradation of these compounds and in their utilization as carbon and energy sources, or in the rescue of pyrimidine bases for nucleotide synthesis. This chain is Thymidine phosphorylase, found in Shigella flexneri serotype 5b (strain 8401).